Here is a 229-residue protein sequence, read N- to C-terminus: Cytidylate kinase (229 aa).

12–20 (GPSGSGKGT) provides a ligand contact to ATP.

Belongs to the cytidylate kinase family. Type 1 subfamily.

The protein resides in the cytoplasm. It carries out the reaction CMP + ATP = CDP + ADP. The enzyme catalyses dCMP + ATP = dCDP + ADP. This is Cytidylate kinase from Pseudomonas fluorescens (strain SBW25).